The sequence spans 96 residues: MSNARDVIKRPVITERSTEVMGDKKYTFEVDVRANKTQIKDAIEEIFDVKVAKVNTMNYKGKPKRFGRYTGFTARRKKAIVTLTPDSKELDFFEGV.

It belongs to the universal ribosomal protein uL23 family. Part of the 50S ribosomal subunit. Contacts protein L29, and trigger factor when it is bound to the ribosome.

In terms of biological role, one of the early assembly proteins it binds 23S rRNA. One of the proteins that surrounds the polypeptide exit tunnel on the outside of the ribosome. Forms the main docking site for trigger factor binding to the ribosome. This Halalkalibacterium halodurans (strain ATCC BAA-125 / DSM 18197 / FERM 7344 / JCM 9153 / C-125) (Bacillus halodurans) protein is Large ribosomal subunit protein uL23.